The sequence spans 1114 residues: OTU domain-containing protein 4 (1114 aa).

M1 is modified (N-acetylmethionine). A disordered region spans residues 1–22; sequence MEAAVGVPDGGDQGGAGPREDA. A compositionally biased stretch (gly residues) spans 8-17; the sequence is PDGGDQGGAG. The 122-residue stretch at 34 to 155 folds into the OTU domain; that stretch reads LYRKLVAKDG…GNHYDIVYPI (122 aa). The cys-loop stretch occupies residues 39 to 45; sequence VAKDGSC. Residue D42 is part of the active site. C45 functions as the Nucleophile in the catalytic mechanism. Residues 94–104 are variable-loop; that stretch reads LENPQEWVGQV. Residue Y120 is modified to Phosphotyrosine. A phosphoserine mark is found at S126 and S128. T131 bears the Phosphothreonine mark. The interval 143-148 is his-loop; sequence FSNGNH. Residue H148 is part of the active site. 5 positions are modified to phosphoserine: S166, S199, S202, S204, and S341. A disordered region spans residues 323-449; sequence KHTSKNLKAP…FGLSPEERRE (127 aa). A compositionally biased stretch (low complexity) spans 392-404; that stretch reads FSSHSSGSQSQKF. Residues 420–435 are compositionally biased toward basic and acidic residues; that stretch reads RKPDRERVEDFDHTSR. Position 439 is a phosphotyrosine (Y439). Position 443 is a phosphoserine (S443). Y460 is subject to Phosphotyrosine. The segment at 472–567 is disordered; it reads ALSSSSVNQS…PAEQKPAEHV (96 aa). The span at 474–487 shows a compositional bias: low complexity; it reads SSSSVNQSASQSSN. Over residues 496–529 the composition is skewed to basic and acidic residues; sequence HVGDRKGSRRRMDTEERKDKDSIHGHSQLDKRPE. Residues S546, S893, and S900 each carry the phosphoserine modification. The segment at 911–1114 is disordered; sequence EFPEARGEHV…MGDGHRGQHT (204 aa). Basic and acidic residues-rich tracts occupy residues 913–922 and 969–1000; these read PEARGEHVHS and NRER…DPKT. 5 positions are modified to phosphoserine: S1006, S1011, S1014, S1023, and S1024. The segment covering 1039 to 1048 has biased composition (polar residues); the sequence is SKQFYNQTYG. Residue S1049 is modified to Phosphoserine. 2 stretches are compositionally biased toward basic and acidic residues: residues 1067-1086 and 1096-1114; these read VRSE…EGYQ and FRGD…GQHT.

Interacts with MYD88; the interaction is direct. Interacts with ALKBH3; the interaction is direct. Interacts with USP7; the interaction is direct. Interacts with USP9X; the interaction is direct. In terms of processing, phosphorylated on Ser-202 and Ser-204 likely by CSNK2A1-CSNK2A2 serine/threonine-protein kinase complex. Activates 'Lys-63'-specific deubiquitinase activity.

Its subcellular location is the cytoplasm. The protein localises to the nucleus. The enzyme catalyses Thiol-dependent hydrolysis of ester, thioester, amide, peptide and isopeptide bonds formed by the C-terminal Gly of ubiquitin (a 76-residue protein attached to proteins as an intracellular targeting signal).. Phosphorylation on Ser-202 and Ser-204 induces 'Lys-63'-specific deubiquitinase activity. Functionally, deubiquitinase which hydrolyzes the isopeptide bond between the ubiquitin C-terminus and the lysine epsilon-amino group of the target protein. May negatively regulate inflammatory and pathogen recognition signaling in innate immune response. Upon phosphorylation at Ser-202 and Ser-204 residues, via IL-1 receptor and Toll-like receptor signaling pathway, specifically deubiquitinates 'Lys-63'-polyubiquitinated MYD88 adapter protein triggering down-regulation of NF-kappa-B-dependent transcription of inflammatory mediators. Independently of the catalytic activity, acts as a scaffold for alternative deubiquitinases to assemble specific deubiquitinase-substrate complexes. Associates with USP7 and USP9X deubiquitinases to stabilize alkylation repair enzyme ALKBH3, thereby promoting the repair of alkylated DNA lesions. The sequence is that of OTU domain-containing protein 4 from Homo sapiens (Human).